The following is a 156-amino-acid chain: Ribosomal RNA large subunit methyltransferase H (156 aa).

S-adenosyl-L-methionine contacts are provided by residues Leu72, Gly104, and 123-128 (LSKMTL).

Belongs to the RNA methyltransferase RlmH family. Homodimer.

It localises to the cytoplasm. It carries out the reaction pseudouridine(1915) in 23S rRNA + S-adenosyl-L-methionine = N(3)-methylpseudouridine(1915) in 23S rRNA + S-adenosyl-L-homocysteine + H(+). Specifically methylates the pseudouridine at position 1915 (m3Psi1915) in 23S rRNA. The polypeptide is Ribosomal RNA large subunit methyltransferase H (Maridesulfovibrio salexigens (strain ATCC 14822 / DSM 2638 / NCIMB 8403 / VKM B-1763) (Desulfovibrio salexigens)).